The chain runs to 1404 residues: DNA-directed RNA polymerase subunit beta' (1404 aa).

Zn(2+)-binding residues include Cys70, Cys72, Cys85, and Cys88. Residues Asp460, Asp462, and Asp464 each coordinate Mg(2+). 4 residues coordinate Zn(2+): Cys814, Cys889, Cys896, and Cys899.

The protein belongs to the RNA polymerase beta' chain family. In terms of assembly, the RNAP catalytic core consists of 2 alpha, 1 beta, 1 beta' and 1 omega subunit. When a sigma factor is associated with the core the holoenzyme is formed, which can initiate transcription. It depends on Mg(2+) as a cofactor. The cofactor is Zn(2+).

The catalysed reaction is RNA(n) + a ribonucleoside 5'-triphosphate = RNA(n+1) + diphosphate. Its function is as follows. DNA-dependent RNA polymerase catalyzes the transcription of DNA into RNA using the four ribonucleoside triphosphates as substrates. The sequence is that of DNA-directed RNA polymerase subunit beta' from Xanthomonas axonopodis pv. citri (strain 306).